The following is a 459-amino-acid chain: Putrescine aminotransferase (459 aa).

Residues 150–151 and Gln-274 each bind pyridoxal 5'-phosphate; that span reads GT. Lys-300 carries the N6-(pyridoxal phosphate)lysine modification. Thr-332 serves as a coordination point for pyridoxal 5'-phosphate.

The protein belongs to the class-III pyridoxal-phosphate-dependent aminotransferase family. Putrescine aminotransferase subfamily. Pyridoxal 5'-phosphate is required as a cofactor.

The enzyme catalyses an alkane-alpha,omega-diamine + 2-oxoglutarate = an omega-aminoaldehyde + L-glutamate. It catalyses the reaction putrescine + 2-oxoglutarate = 1-pyrroline + L-glutamate + H2O. It carries out the reaction cadaverine + 2-oxoglutarate = 5-aminopentanal + L-glutamate. It functions in the pathway amine and polyamine degradation; putrescine degradation; 4-aminobutanal from putrescine (transaminase route): step 1/1. Its function is as follows. Catalyzes the aminotransferase reaction from putrescine to 2-oxoglutarate, leading to glutamate and 4-aminobutanal, which spontaneously cyclizes to form 1-pyrroline. This is the first step in one of two pathways for putrescine degradation, where putrescine is converted into 4-aminobutanoate (gamma-aminobutyrate or GABA) via 4-aminobutanal. Also functions as a cadaverine transaminase in a a L-lysine degradation pathway to succinate that proceeds via cadaverine, glutarate and L-2-hydroxyglutarate. This chain is Putrescine aminotransferase, found in Salmonella choleraesuis (strain SC-B67).